Consider the following 611-residue polypeptide: Dihydroxy-acid dehydratase (611 aa).

A Mg(2+)-binding site is contributed by Asp81. Cys122 provides a ligand contact to [2Fe-2S] cluster. Positions 123 and 124 each coordinate Mg(2+). Lys124 bears the N6-carboxylysine mark. A [2Fe-2S] cluster-binding site is contributed by Cys195. Glu491 lines the Mg(2+) pocket. The active-site Proton acceptor is Ser517.

Belongs to the IlvD/Edd family. Homodimer. The cofactor is [2Fe-2S] cluster. Mg(2+) is required as a cofactor.

It catalyses the reaction (2R)-2,3-dihydroxy-3-methylbutanoate = 3-methyl-2-oxobutanoate + H2O. The catalysed reaction is (2R,3R)-2,3-dihydroxy-3-methylpentanoate = (S)-3-methyl-2-oxopentanoate + H2O. It participates in amino-acid biosynthesis; L-isoleucine biosynthesis; L-isoleucine from 2-oxobutanoate: step 3/4. It functions in the pathway amino-acid biosynthesis; L-valine biosynthesis; L-valine from pyruvate: step 3/4. Its function is as follows. Functions in the biosynthesis of branched-chain amino acids. Catalyzes the dehydration of (2R,3R)-2,3-dihydroxy-3-methylpentanoate (2,3-dihydroxy-3-methylvalerate) into 2-oxo-3-methylpentanoate (2-oxo-3-methylvalerate) and of (2R)-2,3-dihydroxy-3-methylbutanoate (2,3-dihydroxyisovalerate) into 2-oxo-3-methylbutanoate (2-oxoisovalerate), the penultimate precursor to L-isoleucine and L-valine, respectively. The polypeptide is Dihydroxy-acid dehydratase (Brucella abortus (strain S19)).